Reading from the N-terminus, the 423-residue chain is Probable serine/threonine-protein kinase PBL5 (423 aa).

The interval 1-66 (MGCFGCSKKS…DVNNEGGVGK (66 aa)) is disordered. Glycine 2 carries the N-myristoyl glycine lipid modification. Cysteine 3 is lipidated: S-palmitoyl cysteine. The segment covering 12–22 (KRSETNKDTVI) has biased composition (basic and acidic residues). Residues 43 to 52 (TQPSSDSTKV) are compositionally biased toward polar residues. Residue threonine 92 is modified to Phosphothreonine. The Protein kinase domain maps to 103 to 380 (FRSDCFLGEG…SDVVLALNFL (278 aa)). Residues 109-117 (LGEGGFGKV) and lysine 132 contribute to the ATP site. Tyrosine 177 carries the post-translational modification Phosphotyrosine. Aspartate 230 serves as the catalytic Proton acceptor. A phosphoserine mark is found at serine 234 and serine 264. Phosphothreonine occurs at positions 265 and 270. A Phosphotyrosine modification is found at tyrosine 278. Residues 383 to 398 (SKYDPNSPSSSSGKNP) are compositionally biased toward low complexity. The interval 383-423 (SKYDPNSPSSSSGKNPSFHRDRDDEEKRPHLVKETECEGSS) is disordered. Residues 400–423 (FHRDRDDEEKRPHLVKETECEGSS) are compositionally biased toward basic and acidic residues.

This sequence belongs to the protein kinase superfamily. Ser/Thr protein kinase family. Post-translationally, palmitoylation at Cys-3 and Cys-6 are required for plasma membrane location.

The protein resides in the cell membrane. The catalysed reaction is L-seryl-[protein] + ATP = O-phospho-L-seryl-[protein] + ADP + H(+). The enzyme catalyses L-threonyl-[protein] + ATP = O-phospho-L-threonyl-[protein] + ADP + H(+). In terms of biological role, may be involved in plant defense signaling. The polypeptide is Probable serine/threonine-protein kinase PBL5 (Arabidopsis thaliana (Mouse-ear cress)).